A 311-amino-acid chain; its full sequence is Porphobilinogen deaminase (311 aa).

C245 is subject to S-(dipyrrolylmethanemethyl)cysteine.

This sequence belongs to the HMBS family. Monomer. Dipyrromethane serves as cofactor.

The enzyme catalyses 4 porphobilinogen + H2O = hydroxymethylbilane + 4 NH4(+). It participates in porphyrin-containing compound metabolism; protoporphyrin-IX biosynthesis; coproporphyrinogen-III from 5-aminolevulinate: step 2/4. Functionally, tetrapolymerization of the monopyrrole PBG into the hydroxymethylbilane pre-uroporphyrinogen in several discrete steps. This chain is Porphobilinogen deaminase, found in Acinetobacter baylyi (strain ATCC 33305 / BD413 / ADP1).